We begin with the raw amino-acid sequence, 562 residues long: Apyrase (562 aa).

The signal sequence occupies residues 1-24; it reads MAGRPGYSEVIFLYVVSVAVIARA. A divalent metal cation-binding residues include aspartate 47, histidine 49, and aspartate 98. A glycan (N-linked (GlcNAc...) asparagine) is linked at asparagine 112. Positions 130, 233, and 257 each coordinate a divalent metal cation. Arginine 370 lines the AMP pocket. N-linked (GlcNAc...) asparagine glycosylation is present at asparagine 390. AMP is bound by residues arginine 405, phenylalanine 424, and aspartate 514.

Belongs to the 5'-nucleotidase family. (Microbial infection) Interacts with Zika virus envelope protein E and Zika virus-like particles; the interaction does not affect Zika virus replication in human endothelial cells and keratinocytes. The cofactor is a divalent metal cation. Post-translationally, the N-terminus is blocked. As to expression, female saliva (at protein level). Female salivary gland (at protein level). Not detected or low-level expression in female carcasses without salivary glands. Not detected in male tissues.

The protein localises to the secreted. The catalysed reaction is a ribonucleoside 5'-triphosphate + 2 H2O = a ribonucleoside 5'-phosphate + 2 phosphate + 2 H(+). Its function is as follows. Facilitates hematophagy by preventing ADP-, collagen- and thrombin-dependent platelet aggregation in the host. Cleaves adenosine triphosphate (ATP) and adenosine diphosphate (ADP) to adenosine monophosphate (AMP) and inorganic phosphate. May reduce probing time by facilitating the speed of locating blood. Functionally, (Microbial infection) Does not affect Zika virus replication in human endothelial cells and keratinocytes. The chain is Apyrase from Aedes aegypti (Yellowfever mosquito).